The primary structure comprises 155 residues: Ribosomal RNA large subunit methyltransferase H (155 aa).

Residues Leu-72, Gly-103, and Leu-122–Leu-127 each bind S-adenosyl-L-methionine.

This sequence belongs to the RNA methyltransferase RlmH family. Homodimer.

The protein localises to the cytoplasm. It carries out the reaction pseudouridine(1915) in 23S rRNA + S-adenosyl-L-methionine = N(3)-methylpseudouridine(1915) in 23S rRNA + S-adenosyl-L-homocysteine + H(+). In terms of biological role, specifically methylates the pseudouridine at position 1915 (m3Psi1915) in 23S rRNA. The protein is Ribosomal RNA large subunit methyltransferase H of Enterobacter sp. (strain 638).